We begin with the raw amino-acid sequence, 367 residues long: Phosphoribosylaminoimidazole-succinocarboxamide synthase (367 aa).

It belongs to the SAICAR synthetase family.

The catalysed reaction is 5-amino-1-(5-phospho-D-ribosyl)imidazole-4-carboxylate + L-aspartate + ATP = (2S)-2-[5-amino-1-(5-phospho-beta-D-ribosyl)imidazole-4-carboxamido]succinate + ADP + phosphate + 2 H(+). Its pathway is purine metabolism; IMP biosynthesis via de novo pathway; 5-amino-1-(5-phospho-D-ribosyl)imidazole-4-carboxamide from 5-amino-1-(5-phospho-D-ribosyl)imidazole-4-carboxylate: step 1/2. The polypeptide is Phosphoribosylaminoimidazole-succinocarboxamide synthase (Shewanella baltica (strain OS155 / ATCC BAA-1091)).